We begin with the raw amino-acid sequence, 349 residues long: ATP phosphoribosyltransferase regulatory subunit (349 aa).

Residues 327-349 (GRGRGVRPRRASARGGRARARPR) are disordered. Residues 330–349 (RGVRPRRASARGGRARARPR) show a composition bias toward basic residues.

It belongs to the class-II aminoacyl-tRNA synthetase family. HisZ subfamily. As to quaternary structure, heteromultimer composed of HisG and HisZ subunits.

It localises to the cytoplasm. The protein operates within amino-acid biosynthesis; L-histidine biosynthesis; L-histidine from 5-phospho-alpha-D-ribose 1-diphosphate: step 1/9. In terms of biological role, required for the first step of histidine biosynthesis. May allow the feedback regulation of ATP phosphoribosyltransferase activity by histidine. The sequence is that of ATP phosphoribosyltransferase regulatory subunit from Anaeromyxobacter dehalogenans (strain 2CP-1 / ATCC BAA-258).